The primary structure comprises 151 residues: Flavodoxin YqcA (151 aa).

The region spanning 4 to 145 is the Flavodoxin-like domain; that stretch reads IGIFVGTVYG…ISCPWVEAWA (142 aa). Residues 10–15 and 99–101 each bind FMN; these read TVYGNA and NFC.

It belongs to the flavodoxin family. MioC subfamily. As to quaternary structure, monomer. The cofactor is FMN.

Probable electron transporter. The protein is Flavodoxin YqcA of Pectobacterium carotovorum subsp. carotovorum (Erwinia carotovora subsp. carotovora).